A 221-amino-acid polypeptide reads, in one-letter code: Anti-sigma-W factor RsiW (221 aa).

Over 1 to 87 (MKTCHSHDEL…AKWKLKAKRH (87 aa)) the chain is Cytoplasmic. Residues His30, Cys34, and Cys37 each contribute to the Zn(2+) site. A helical membrane pass occupies residues 88–108 (PILVAAAIFLIMMSAAFFSAW). Residues 109-221 (SHTTDGIAVS…GEDDPHSTDN (113 aa)) are Extracellular-facing.

This sequence belongs to the zinc-associated anti-sigma factor (ZAS) superfamily. Anti-sigma-W factor family. Requires Zn(2+) as cofactor. In terms of processing, is processed by three successive proteolytic events. First, the extracellular region of RsiW is cleaved by PrsW (Site-1 cleavage) in response to cell envelope stresses. Next, it undergoes cleavage at an intramembrane site (Site-2 cleavage) mediated by RasP. This cleavage uncovers a cryptic proteolytic tag with conserved alanine residues in the transmembrane segment, that is recognized mainly by the ClpXP protease, which completely degrades the protein in the cytoplasm and leads to the induction of the sigma-W-controlled genes.

Its subcellular location is the membrane. In terms of biological role, is the anti-sigma factor for SigW. The presence of RsiW leads to the inactivation of SigW, and its proteolytic destruction to sigma-W activation. In Shouchella clausii (strain KSM-K16) (Alkalihalobacillus clausii), this protein is Anti-sigma-W factor RsiW (rsiW).